The chain runs to 196 residues: Beta-crystallin A4 (196 aa).

T2 carries the N-acetylthreonine modification. Residues 2–11 (TLQCTKSAGH) are N-terminal arm. Beta/gamma crystallin 'Greek key' domains are found at residues 12–51 (WRVV…KVLS) and 52–98 (GAWV…RPVA). Residues 99 to 104 (CANHRD) form a connecting peptide region. Beta/gamma crystallin 'Greek key' domains are found at residues 105 to 146 (SRLT…HVQS) and 147 to 195 (GAWV…RRIQ).

Homo/heterodimer, or complexes of higher-order. The structure of beta-crystallin oligomers seems to be stabilized through interactions between the N-terminal arms.

Functionally, crystallins are the dominant structural components of the vertebrate eye lens. This Rattus norvegicus (Rat) protein is Beta-crystallin A4 (Cryba4).